The following is a 356-amino-acid chain: Cyclin-D2-2 (356 aa).

A compositionally biased stretch (polar residues) spans 325–343 (LGSSQSNSNNKDYNSQDSA). The disordered stretch occupies residues 325–356 (LGSSQSNSNNKDYNSQDSAPASKRRRLNTTPI). Positions 346-356 (SKRRRLNTTPI) are enriched in basic residues.

This sequence belongs to the cyclin family. Cyclin D subfamily.

In Oryza sativa subsp. japonica (Rice), this protein is Cyclin-D2-2 (CYCD2-2).